The sequence spans 461 residues: D-phenylhydantoinase (461 aa).

A divalent metal cation contacts are provided by His59, His61, and Lys151. An N6-carboxylysine modification is found at Lys151. Tyr156 provides a ligand contact to substrate. A divalent metal cation contacts are provided by His182 and His239. Ser286 contacts substrate. Asp313 is a binding site for a divalent metal cation. Asn335 is a binding site for substrate.

Belongs to the metallo-dependent hydrolases superfamily. Hydantoinase/dihydropyrimidinase family. As to quaternary structure, homotetramer. Zn(2+) serves as cofactor. It depends on Ni(2+) as a cofactor. The cofactor is Co(2+). Mn(2+) is required as a cofactor. In terms of processing, carboxylation allows a single lysine to coordinate two divalent metal cations.

The enzyme catalyses D-5-phenylhydantoin + H2O = N-carbamoyl-D-phenylglycine + H(+). Catalyzes the stereospecific hydrolysis of the cyclic amide bond of D-hydantoin derivatives with an aromatic side chains at the 5'-position. Has no activity on dihydropyrimidines. The physiological function is unknown. The polypeptide is D-phenylhydantoinase (hyuA) (Escherichia coli (strain K12)).